Here is a 524-residue protein sequence, read N- to C-terminus: Tyrosine-protein kinase HCK (524 aa).

The segment at methionine 1–phenylalanine 72 is disordered. The N-myristoyl glycine moiety is linked to residue glycine 2. A lipid anchor (S-palmitoyl cysteine) is attached at glycine 3. A compositionally biased stretch (basic and acidic residues) spans phenylalanine 29–lysine 38. Residue tyrosine 50 is modified to Phosphotyrosine; by autocatalysis. Residues proline 54 to methionine 68 show a composition bias toward polar residues. Residues serine 76–serine 136 form the SH3 domain. In terms of domain architecture, SH2 spans tryptophan 142–cysteine 239. Threonine 200 carries the phosphothreonine modification. Phosphotyrosine is present on tyrosine 207. Positions leucine 260–tyrosine 513 constitute a Protein kinase domain. ATP is bound by residues leucine 266–valine 274 and lysine 288. The active-site Proton acceptor is the aspartate 379. Tyrosine 409 carries the post-translational modification Phosphotyrosine; by autocatalysis. Serine 460 is subject to Phosphoserine. Tyrosine 520 bears the Phosphotyrosine mark.

This sequence belongs to the protein kinase superfamily. Tyr protein kinase family. SRC subfamily. In terms of assembly, interacts with ADAM15. Interacts with FASLG. Interacts with ARRB1 and ARRB2. Interacts with FCGR1A; the interaction may be indirect. Interacts with IL6ST. Interacts (via SH3 domain) with ELMO1. Interacts (via SH3 domain) with TP73. Interacts with YAP1. Interacts with ABL1 and ITGB1, and thereby recruits ABL1 to activated ITGB1. Interacts (via SH2 domain) with FLT3 (tyrosine phosphorylated). Interacts with CBL. Interacts with VAV1, WAS and RAPGEF1. Interacts (via SH3 domain) with WDCP. Post-translationally, phosphorylated on several tyrosine residues. Autophosphorylated. Becomes rapidly phosphorylated upon activation of the immunoglobulin receptors FCGR1A and FCGR2A. Phosphorylation at Tyr-409 increases kinase activity. Phosphorylation at Tyr-520 inhibits kinase activity. Kinase activity is not required for phosphorylation at Tyr-520, suggesting that this site may be a target of other kinases. In terms of processing, ubiquitinated by CBL, leading to its degradation via the proteasome. Isoform 2 palmitoylation at position 2 requires prior myristoylation. Palmitoylation at position 3 is required for caveolar localization of isoform 2. In terms of tissue distribution, expressed predominantly in cells of the myeloid and B-lymphoid lineages.

It is found in the cytoplasmic vesicle. The protein resides in the secretory vesicle. It localises to the cytoplasm. Its subcellular location is the cytosol. The protein localises to the membrane. It is found in the caveola. The protein resides in the lysosome. It localises to the cell projection. Its subcellular location is the podosome membrane. The protein localises to the cell membrane. It is found in the cell junction. The protein resides in the focal adhesion. It localises to the cytoskeleton. Its subcellular location is the golgi apparatus. The protein localises to the nucleus. It catalyses the reaction L-tyrosyl-[protein] + ATP = O-phospho-L-tyrosyl-[protein] + ADP + H(+). With respect to regulation, subject to autoinhibition, mediated by intramolecular interactions involving the SH2 and SH3 domains. Kinase activity is also regulated by phosphorylation at regulatory tyrosine residues. Phosphorylation at Tyr-409 is required for optimal activity. Phosphorylation at Tyr-520 inhibits kinase activity. Inhibited by PP1. Non-receptor tyrosine-protein kinase found in hematopoietic cells that transmits signals from cell surface receptors and plays an important role in the regulation of innate immune responses, including neutrophil, monocyte, macrophage and mast cell functions, phagocytosis, cell survival and proliferation, cell adhesion and migration. Acts downstream of receptors that bind the Fc region of immunoglobulins, such as FCGR1A and FCGR2A, but also CSF3R, PLAUR, the receptors for IFNG, IL2, IL6 and IL8, and integrins, such as ITGB1 and ITGB2. During the phagocytic process, mediates mobilization of secretory lysosomes, degranulation, and activation of NADPH oxidase to bring about the respiratory burst. Plays a role in the release of inflammatory molecules. Promotes reorganization of the actin cytoskeleton and actin polymerization, formation of podosomes and cell protrusions. Inhibits TP73-mediated transcription activation and TP73-mediated apoptosis. Phosphorylates CBL in response to activation of immunoglobulin gamma Fc region receptors. Phosphorylates ADAM15, BCR, ELMO1, FCGR2A, GAB1, GAB2, RAPGEF1, STAT5B, TP73, VAV1 and WAS. In Mus musculus (Mouse), this protein is Tyrosine-protein kinase HCK (Hck).